The chain runs to 764 residues: 1,4-alpha-glucan branching enzyme GlgB (764 aa).

Asp-434 serves as the catalytic Nucleophile. Glu-487 acts as the Proton donor in catalysis.

The protein belongs to the glycosyl hydrolase 13 family. GlgB subfamily. Monomer.

It catalyses the reaction Transfers a segment of a (1-&gt;4)-alpha-D-glucan chain to a primary hydroxy group in a similar glucan chain.. It participates in glycan biosynthesis; glycogen biosynthesis. Functionally, catalyzes the formation of the alpha-1,6-glucosidic linkages in glycogen by scission of a 1,4-alpha-linked oligosaccharide from growing alpha-1,4-glucan chains and the subsequent attachment of the oligosaccharide to the alpha-1,6 position. This Nostoc sp. (strain PCC 7120 / SAG 25.82 / UTEX 2576) protein is 1,4-alpha-glucan branching enzyme GlgB.